A 318-amino-acid polypeptide reads, in one-letter code: Ribonuclease Z (318 aa).

Zn(2+) contacts are provided by His-62, His-64, Asp-66, His-67, His-139, Asp-210, and His-268. The active-site Proton acceptor is Asp-66.

Belongs to the RNase Z family. As to quaternary structure, homodimer. Requires Zn(2+) as cofactor.

It carries out the reaction Endonucleolytic cleavage of RNA, removing extra 3' nucleotides from tRNA precursor, generating 3' termini of tRNAs. A 3'-hydroxy group is left at the tRNA terminus and a 5'-phosphoryl group is left at the trailer molecule.. In terms of biological role, zinc phosphodiesterase, which displays some tRNA 3'-processing endonuclease activity. Probably involved in tRNA maturation, by removing a 3'-trailer from precursor tRNA. In Gloeothece citriformis (strain PCC 7424) (Cyanothece sp. (strain PCC 7424)), this protein is Ribonuclease Z.